The following is a 598-amino-acid chain: MLRTHEAGSLRADHAGQTVTLTGWVARRRDHGGVAFLDLRDASGVVQVVARDEILDAGGARELRNEYCIRITGDVRLRPEGNDNANIPTGAVEVDTTALEVLSEAAPLPFQIDDHLNVGEEARLKHRYLDLRRTGPANALKLRSAANRAARAVLEEHAFTEIETPTLTRSTPEGARDFLVPARLAPGSWYALPQSPQLFKQLLMVAGMERYYQLARCYRDEDFRADRQPEFTQLDIEMSFVEQDDVIALGEQIVAALWKLIGHDVPLPLPRMTYEEAMRRYGSDKPDLRFGLELVECAGFFADTTFRVFQAPYVGAVVMPGGASQPRKTLDAWQEWAKQRGARGLAYVLVGQDGELSGPVAKNLSDTERAGLAAHVGANPGDCIFFAAGAVNPSRALLGAARAEIARRTGAIDESAWSFLWVVDAPMFKSAAEDDDVSIGEGSWNAVHHAFTAPKPEVVDTFDTDPGSALSNAYDIVCNGNEIGGGSIRIHRRDVQERVFAVMGISEADAREKFGFLLDAFSFGAPPHGGIAFGWDRVVALLAGVDSIREVIAFPKSGGGYDPLTAAPAPITAQQRKEAGVDAKPETKKAAAGEPAGA.

Position 173 (Glu173) interacts with L-aspartate. Residues 197–200 (QLFK) form an aspartate region. Position 219 (Arg219) interacts with L-aspartate. Residues 219–221 (RDE) and Gln228 each bind ATP. His448 is an L-aspartate binding site. Glu482 serves as a coordination point for ATP. Arg489 lines the L-aspartate pocket. 534 to 537 (GWDR) is a binding site for ATP. Residues 560 to 598 (GYDPLTAAPAPITAQQRKEAGVDAKPETKKAAAGEPAGA) are disordered. The span at 575-591 (QRKEAGVDAKPETKKAA) shows a compositional bias: basic and acidic residues.

The protein belongs to the class-II aminoacyl-tRNA synthetase family. Type 1 subfamily. As to quaternary structure, homodimer.

It localises to the cytoplasm. It catalyses the reaction tRNA(Asx) + L-aspartate + ATP = L-aspartyl-tRNA(Asx) + AMP + diphosphate. In terms of biological role, aspartyl-tRNA synthetase with relaxed tRNA specificity since it is able to aspartylate not only its cognate tRNA(Asp) but also tRNA(Asn). Reaction proceeds in two steps: L-aspartate is first activated by ATP to form Asp-AMP and then transferred to the acceptor end of tRNA(Asp/Asn). This chain is Aspartate--tRNA(Asp/Asn) ligase, found in Kineococcus radiotolerans (strain ATCC BAA-149 / DSM 14245 / SRS30216).